Reading from the N-terminus, the 321-residue chain is Endoglucanase 1 (321 aa).

The signal sequence occupies residues M1–A27. D110 is an active-site residue. A disulfide bond links C112 and C156. The Proton donor role is filled by D149. D295 functions as the Nucleophile in the catalytic mechanism.

This sequence belongs to the glycosyl hydrolase 6 (cellulase B) family.

The enzyme catalyses Endohydrolysis of (1-&gt;4)-beta-D-glucosidic linkages in cellulose, lichenin and cereal beta-D-glucans.. In terms of biological role, implicated in the mechanism of induction exerted by cellobiose. This Streptomyces halstedii protein is Endoglucanase 1 (celA1).